Here is a 195-residue protein sequence, read N- to C-terminus: Imidazoleglycerol-phosphate dehydratase (195 aa).

It belongs to the imidazoleglycerol-phosphate dehydratase family.

Its subcellular location is the cytoplasm. It carries out the reaction D-erythro-1-(imidazol-4-yl)glycerol 3-phosphate = 3-(imidazol-4-yl)-2-oxopropyl phosphate + H2O. The protein operates within amino-acid biosynthesis; L-histidine biosynthesis; L-histidine from 5-phospho-alpha-D-ribose 1-diphosphate: step 6/9. The chain is Imidazoleglycerol-phosphate dehydratase from Cupriavidus taiwanensis (strain DSM 17343 / BCRC 17206 / CCUG 44338 / CIP 107171 / LMG 19424 / R1) (Ralstonia taiwanensis (strain LMG 19424)).